Here is a 254-residue protein sequence, read N- to C-terminus: Uridylate kinase (254 aa).

9–12 (KLSG) contributes to the ATP binding site. Glycine 51 provides a ligand contact to UMP. The ATP site is built by glycine 52 and arginine 56. Residues aspartate 72 and 133 to 140 (SGNPFFTT) each bind UMP. Residues threonine 160, tyrosine 166, and aspartate 169 each contribute to the ATP site.

It belongs to the UMP kinase family. In terms of assembly, homohexamer.

Its subcellular location is the cytoplasm. It catalyses the reaction UMP + ATP = UDP + ADP. The protein operates within pyrimidine metabolism; CTP biosynthesis via de novo pathway; UDP from UMP (UMPK route): step 1/1. Inhibited by UTP. Catalyzes the reversible phosphorylation of UMP to UDP. In Synechococcus sp. (strain JA-3-3Ab) (Cyanobacteria bacterium Yellowstone A-Prime), this protein is Uridylate kinase.